Consider the following 96-residue polypeptide: ESAT-6-like protein EsxR (96 aa).

The protein belongs to the WXG100 family. ESAT-6 subfamily.

It localises to the secreted. This Mycobacterium leprae (strain TN) protein is ESAT-6-like protein EsxR.